The chain runs to 86 residues: uncharacterized protein (86 aa).

This is an uncharacterized protein from Schizosaccharomyces pombe (strain 972 / ATCC 24843) (Fission yeast).